The following is a 139-amino-acid chain: Small ribosomal subunit protein uS9 (139 aa).

The protein belongs to the universal ribosomal protein uS9 family.

The polypeptide is Small ribosomal subunit protein uS9 (Coxiella burnetii (strain CbuG_Q212) (Coxiella burnetii (strain Q212))).